A 339-amino-acid chain; its full sequence is Protein FAM50A (339 aa).

The segment at 1–31 (MAQYKGAASEAGRAMHLMKKREKQREQMEQM) is disordered. Residue Ala-2 is modified to N-acetylalanine. Lys-100 is covalently cross-linked (Glycyl lysine isopeptide (Lys-Gly) (interchain with G-Cter in SUMO2)). A disordered region spans residues 150 to 177 (TTKKKKLGKNPDVDTSFLPDRDREEEEN). The short motif at 152–155 (KKKK) is the Nuclear localization signal element. The segment covering 168 to 177 (PDRDREEEEN) has biased composition (basic and acidic residues).

The protein belongs to the FAM50 family. Interacts with EFTUD2, a component of the spliceosome U5 complex. Interacts with DDX41, a component of the spliceosome C complex. In terms of tissue distribution, widely expressed in embryonic and adult tissues.

It is found in the nucleus. Probably involved in the regulation of pre-mRNA splicing. This is Protein FAM50A (Fam50a) from Mus musculus (Mouse).